Reading from the N-terminus, the 299-residue chain is ATP phosphoribosyltransferase (299 aa).

Belongs to the ATP phosphoribosyltransferase family. Long subfamily. Equilibrium between an active dimeric form, an inactive hexameric form and higher aggregates. Interconversion between the various forms is largely reversible and is influenced by the natural substrates and inhibitors of the enzyme. The cofactor is Mg(2+).

The protein localises to the cytoplasm. The enzyme catalyses 1-(5-phospho-beta-D-ribosyl)-ATP + diphosphate = 5-phospho-alpha-D-ribose 1-diphosphate + ATP. Its pathway is amino-acid biosynthesis; L-histidine biosynthesis; L-histidine from 5-phospho-alpha-D-ribose 1-diphosphate: step 1/9. With respect to regulation, feedback inhibited by histidine. Catalyzes the condensation of ATP and 5-phosphoribose 1-diphosphate to form N'-(5'-phosphoribosyl)-ATP (PR-ATP). Has a crucial role in the pathway because the rate of histidine biosynthesis seems to be controlled primarily by regulation of HisG enzymatic activity. This chain is ATP phosphoribosyltransferase (hisG), found in Buchnera aphidicola subsp. Schizaphis graminum (strain Sg).